The primary structure comprises 102 residues: Small ribosomal subunit protein uS10 (102 aa).

This sequence belongs to the universal ribosomal protein uS10 family. Part of the 30S ribosomal subunit.

Its function is as follows. Involved in the binding of tRNA to the ribosomes. The chain is Small ribosomal subunit protein uS10 from Pediococcus pentosaceus (strain ATCC 25745 / CCUG 21536 / LMG 10740 / 183-1w).